Reading from the N-terminus, the 223-residue chain is DnaJ homolog subfamily B member 9 (223 aa).

Positions 1–23 (MATPQSIFIFAICILMITELILA) are cleaved as a signal peptide. A J domain is found at 26–90 (SYYDILGVPK…NRRKEYDTLG (65 aa)). The tract at residues 91–223 (HSAFTSGKGQ…VTTYTDCSGQ (133 aa)) is divergent targeting domain. Ser133 bears the Phosphoserine mark.

In terms of assembly, interacts with HSPA5/BiP; interaction is direct. Interacts with ERN1/IRE1 (via the luminal region). Interacts with DERL1. As to expression, widely expressed. Expressed at highest level in the liver, placenta and kidney.

Its subcellular location is the endoplasmic reticulum lumen. Functionally, co-chaperone for Hsp70 protein HSPA5/BiP that acts as a key repressor of the ERN1/IRE1-mediated unfolded protein response (UPR). J domain-containing co-chaperones stimulate the ATPase activity of Hsp70 proteins and are required for efficient substrate recognition by Hsp70 proteins. In the unstressed endoplasmic reticulum, interacts with the luminal region of ERN1/IRE1 and selectively recruits HSPA5/BiP: HSPA5/BiP disrupts the dimerization of the active ERN1/IRE1 luminal region, thereby inactivating ERN1/IRE1. Also involved in endoplasmic reticulum-associated degradation (ERAD) of misfolded proteins. Required for survival of B-cell progenitors and normal antibody production. This chain is DnaJ homolog subfamily B member 9 (DNAJB9), found in Homo sapiens (Human).